A 513-amino-acid chain; its full sequence is MGARSESLVGVVLLFQLLADRLWCAATASDSLYDVSYSITAIKPRVDEMVSVDTHMYSHRWKRQSVDTNRPSVGQDFPDMFLEGTNENGTEIEEDTDHKYYTSRTYGPLDSASRDLWVNIDQMEKEKVKIHGILSNTHRQAARVNLSFDFPFYGHFLREITVATGGFIYTGEVVHRMLTATQYIAPLMANFDPSVSRNSTVRYFDNGTALVVQWDHVHLRDNYSLGSFTFQATLINDGRIVFGYKDIPVPVMQISSTNHPVKVGLSDAFVVVHKIQQIPNVRRRTIFEYHRVELEMTKITSFSAVEMLPLATCLQFNSCSSCVSSMIGFNCSWCNIPQRCSSGFDRHRQDWVENGCTEESKDTVCDDLLQTTGISHHTTTGLHATTSIYAFTTTTRMASHFPSNLPTEDDTKIALHLKDNGASTDNSAAEMKTGTLHTGLIIGILILVLLIITAILVAVYMYHHPTSSASLFLIERRPSRWPAMKFRRGSGHPAYAEVEPIGEKEGFIVSEQC.

An N-terminal signal peptide occupies residues 1–24; it reads MGARSESLVGVVLLFQLLADRLWC. The Extracellular segment spans residues 25 to 438; sequence AATASDSLYD…AEMKTGTLHT (414 aa). N-linked (GlcNAc...) asparagine glycans are attached at residues N88, N145, N198, N206, N222, and N330. Positions 312 to 357 constitute a PSI domain; that stretch reads TCLQFNSCSSCVSSMIGFNCSWCNIPQRCSSGFDRHRQDWVENGCT. The helical transmembrane segment at 439–459 threads the bilayer; the sequence is GLIIGILILVLLIITAILVAV. At 460–513 the chain is on the cytoplasmic side; the sequence is YMYHHPTSSASLFLIERRPSRWPAMKFRRGSGHPAYAEVEPIGEKEGFIVSEQC.

The protein belongs to the plexin family.

The protein localises to the membrane. The chain is Plexin domain-containing protein 2 (plxdc2) from Xenopus laevis (African clawed frog).